A 279-amino-acid polypeptide reads, in one-letter code: NH(3)-dependent NAD(+) synthetase (279 aa).

40–47 provides a ligand contact to ATP; the sequence is GLSGGIDS. Asp-46 is a Mg(2+) binding site. Arg-122 serves as a coordination point for deamido-NAD(+). Thr-142 is a binding site for ATP. Residue Glu-147 participates in Mg(2+) binding. Residues Lys-155 and Asp-162 each contribute to the deamido-NAD(+) site. Positions 171 and 193 each coordinate ATP. Deamido-NAD(+) is bound at residue 253–254; sequence HK.

This sequence belongs to the NAD synthetase family. Homodimer.

The enzyme catalyses deamido-NAD(+) + NH4(+) + ATP = AMP + diphosphate + NAD(+) + H(+). It functions in the pathway cofactor biosynthesis; NAD(+) biosynthesis; NAD(+) from deamido-NAD(+) (ammonia route): step 1/1. In terms of biological role, catalyzes the ATP-dependent amidation of deamido-NAD to form NAD. Uses ammonia as a nitrogen source. In Sulfurisphaera tokodaii (strain DSM 16993 / JCM 10545 / NBRC 100140 / 7) (Sulfolobus tokodaii), this protein is NH(3)-dependent NAD(+) synthetase.